The chain runs to 166 residues: NAD(P)H-quinone oxidoreductase subunit I, chloroplastic (166 aa).

2 consecutive 4Fe-4S ferredoxin-type domains span residues 55 to 84 and 95 to 124; these read GRIH…VDWK and LNYS…MTEE. Residues Cys-64, Cys-67, Cys-70, Cys-74, Cys-104, Cys-107, Cys-110, and Cys-114 each contribute to the [4Fe-4S] cluster site.

The protein belongs to the complex I 23 kDa subunit family. As to quaternary structure, NDH is composed of at least 16 different subunits, 5 of which are encoded in the nucleus. It depends on [4Fe-4S] cluster as a cofactor.

The protein localises to the plastid. It localises to the chloroplast thylakoid membrane. The catalysed reaction is a plastoquinone + NADH + (n+1) H(+)(in) = a plastoquinol + NAD(+) + n H(+)(out). It carries out the reaction a plastoquinone + NADPH + (n+1) H(+)(in) = a plastoquinol + NADP(+) + n H(+)(out). In terms of biological role, NDH shuttles electrons from NAD(P)H:plastoquinone, via FMN and iron-sulfur (Fe-S) centers, to quinones in the photosynthetic chain and possibly in a chloroplast respiratory chain. The immediate electron acceptor for the enzyme in this species is believed to be plastoquinone. Couples the redox reaction to proton translocation, and thus conserves the redox energy in a proton gradient. The sequence is that of NAD(P)H-quinone oxidoreductase subunit I, chloroplastic from Picradeniopsis absinthifolia (Hairyseed bahia).